The sequence spans 166 residues: MSPKKAKKRLEGGSSNVFSMFEQTQIQEFKEAFTIMDQNRDGFIDKNDLRDTFAALGRVNVKNEEIDEMIKEAPGPINFTVFLTMFGEKLKGADPEETILNAFKVFDPEGKGSLKADYVREMLTTQAERFSKEEIDQMFAAFPPDVTGNLDYKNLVHIITHGEEKD.

Ser2 is subject to N,N,N-trimethylserine. Residues Ser14, Ser15, and Ser19 each carry the phosphoserine modification. 3 consecutive EF-hand domains span residues 24 to 59 (TQIQ…LGRV), 94 to 129 (DPEE…QAER), and 130 to 165 (FSKE…GEEK). Ca(2+)-binding residues include Asp37, Asn39, Asp41, and Asp48. Thr52 carries the phosphothreonine modification.

In terms of assembly, myosin is a hexamer of 2 heavy chains and 4 light chains. Interacts with MYOC. In terms of processing, N-terminus is methylated by METTL11A/NTM1. Phosphorylated by MYLK3 and MYLK2; promotes cardiac muscle contraction and function. Dephosphorylated by PPP1CB complexed to PPP1R12B. The phosphorylated form in adult is expressed as gradients across the heart from endocardium (low phosphorylation) to epicardium (high phosphorylation); regulates cardiac torsion and workload distribution. Abundantly expressed in both cardiac and slow skeletal muscle (soleus), with no detectable expression in fast skeletal muscle (vastus lateralis) or non-muscle tissue.

Its subcellular location is the cytoplasm. It localises to the myofibril. The protein localises to the sarcomere. It is found in the a band. Contractile protein that plays a role in heart development and function. Following phosphorylation, plays a role in cross-bridge cycling kinetics and cardiac muscle contraction by increasing myosin lever arm stiffness and promoting myosin head diffusion; as a consequence of the increase in maximum contraction force and calcium sensitivity of contraction force. These events altogether slow down myosin kinetics and prolong duty cycle resulting in accumulated myosins being cooperatively recruited to actin binding sites to sustain thin filament activation as a means to fine-tune myofilament calcium sensitivity to force. During cardiogenesis plays an early role in cardiac contractility by promoting cardiac myofibril assembly. In Rattus norvegicus (Rat), this protein is Myosin regulatory light chain 2, ventricular/cardiac muscle isoform.